Consider the following 163-residue polypeptide: Nucleotide-binding protein Pnap_1080 (163 aa).

Belongs to the YajQ family.

Functionally, nucleotide-binding protein. The chain is Nucleotide-binding protein Pnap_1080 from Polaromonas naphthalenivorans (strain CJ2).